A 77-amino-acid chain; its full sequence is Acyl carrier protein (77 aa).

One can recognise a Carrier domain in the interval 1-76; the sequence is MDREQRIKEI…DVINYLNEKL (76 aa). Position 36 is an O-(pantetheine 4'-phosphoryl)serine (serine 36).

It belongs to the acyl carrier protein (ACP) family. 4'-phosphopantetheine is transferred from CoA to a specific serine of apo-ACP by AcpS. This modification is essential for activity because fatty acids are bound in thioester linkage to the sulfhydryl of the prosthetic group.

Its subcellular location is the cytoplasm. It participates in lipid metabolism; fatty acid biosynthesis. Its function is as follows. Carrier of the growing fatty acid chain in fatty acid biosynthesis. The protein is Acyl carrier protein of Hydrogenobaculum sp. (strain Y04AAS1).